The sequence spans 602 residues: Alpha-glucosides permease MPH3 (602 aa).

Topologically, residues 1–106 (MKNLSFLINR…AAAWSLLVST (106 aa)) are cytoplasmic. A helical transmembrane segment spans residues 107–127 (TLIMEGYDTAILGAFYALPIF). Over 128-142 (QRKFGSQNDKTGEWE) the chain is Extracellular. Residues 143 to 163 (ISASWQIGLTLCYMAGEIVGL) traverse the membrane as a helical segment. Residues 164–178 (QLTGPSVDLVGNRYT) are Cytoplasmic-facing. Residues 179-199 (LIIALFFLAAFTFILYFCNSL) traverse the membrane as a helical segment. Position 200 (Gly-200) is a topological domain, extracellular. The helical transmembrane segment at 201 to 221 (MIAVGQALCGMPWGCFQCLTV) threads the bilayer. Topologically, residues 222–234 (SYASEICPLALRY) are cytoplasmic. A helical transmembrane segment spans residues 235 to 255 (YLTTYSNLCWLFGQLFAAGIM). The Extracellular segment spans residues 256–270 (KNSQKKYADSELGYK). Residues 271–291 (LPFALQWILPVPLALGIFFAP) form a helical membrane-spanning segment. The Cytoplasmic portion of the chain corresponds to 292 to 363 (ESPWWLVKKG…EDKINRRRTR (72 aa)). Residues 364 to 384 (ITCLCWAGQATCGSILIGYST) form a helical membrane-spanning segment. Residues 385–397 (YFYEKAGVSTEMS) are Extracellular-facing. The helical transmembrane segment at 398-418 (FTFSIIQYCLGICATFLSWWA) threads the bilayer. Topologically, residues 419-426 (SKYFGRYD) are cytoplasmic. The helical transmembrane segment at 427–447 (LYAFGLAFQTIVFFIIGGLGC) threads the bilayer. Topologically, residues 448–459 (SSTHGSKMGSGS) are extracellular. Residues 460-480 (LLMAVAFFYNLGIAPVVFCLV) form a helical membrane-spanning segment. The Cytoplasmic portion of the chain corresponds to 481–492 (SEMPSSRLRTKT). The helical transmembrane segment at 493–513 (IILARNTYNVVSIICSVLILY) threads the bilayer. Residues 514–525 (QLNSKKWNWGAK) lie on the Extracellular side of the membrane. Residues 526-546 (SGFFWGVLCFCTLIWAVVDLP) form a helical membrane-spanning segment. At 547–602 (ETAGKTFVEINELFKLGVSARKFKSTKVDPFVVKTPPKDVSHNDPKGDIEASIAEE) the chain is on the cytoplasmic side. Residues 582–595 (PPKDVSHNDPKGDI) are compositionally biased toward basic and acidic residues. The interval 582 to 602 (PPKDVSHNDPKGDIEASIAEE) is disordered.

The protein belongs to the major facilitator superfamily. Sugar transporter (TC 2.A.1.1) family.

Its subcellular location is the cell membrane. Its function is as follows. High-affinity uptake of maltose and maltotriose. Also transports alpha-methylglucoside, glucose and turanose but not melezitose or trehalose. The polypeptide is Alpha-glucosides permease MPH3 (MPH3) (Saccharomyces cerevisiae (strain ATCC 204508 / S288c) (Baker's yeast)).